A 137-amino-acid polypeptide reads, in one-letter code: Prostate and testis expressed protein 13 (137 aa).

An N-terminal signal peptide occupies residues 1 to 20 (MFQKLLLSVFIILLMDVGER). The 87-residue stretch at 28–114 (RHCNLCSHYD…CIDRNYCNDG (87 aa)) folds into the UPAR/Ly6 domain. Intrachain disulfides connect Cys30–Cys60, Cys33–Cys41, Cys48–Cys84, Cys87–Cys104, and Cys105–Cys111. N-linked (GlcNAc...) asparagine glycosylation occurs at Asn57.

This sequence belongs to the PATE family. As to expression, strongly expressed in the epididymis, including the initial segment, caput, corpus and cauda regions. Weakly expressed in prostate.

Its subcellular location is the secreted. This Mus musculus (Mouse) protein is Prostate and testis expressed protein 13.